A 921-amino-acid polypeptide reads, in one-letter code: Respiratory burst oxidase homolog protein D (921 aa).

A disordered region spans residues 1 to 71; it reads MKMRRGNSSN…RSNSVAGGRG (71 aa). The Cytoplasmic segment spans residues 1–376; that stretch reads MKMRRGNSSN…KYFILDNWQR (376 aa). A phosphoserine mark is found at S8, S9, S26, and S39. The span at 21–31 shows a compositional bias: polar residues; it reads NSDTNSDTESI. Basic residues predominate over residues 44–53; it reads RPKRASKKNA. 2 EF-hand-like regions span residues 193-203 and 230-241; these read SADSNGLLLSA and NNVSGDAITKEQ. EF-hand domains follow at residues 253–288 and 297–332; these read SFDAKLQVFFDMVDKDEDGRVTEEEVAEIISLSASA and QAKEYAALIMEELDPDNAGFIMIENLEMLLLQAPNQ. Residues D266, D268, D270, R272, and E277 each contribute to the Ca(2+) site. A phosphoserine mark is found at S339, S343, and S347. A helical membrane pass occupies residues 377–397; the sequence is LWIMMLWLGICGGLFTYKFIQ. Over 398–461 the chain is Extracellular; sequence YKNKAAYGVM…FDDSLNFHKV (64 aa). The region spanning 415–572 is the Ferric oxidoreductase domain; that stretch reads KGGAETLKFN…LFIIVYALLI (158 aa). The chain crosses the membrane as a helical span at residues 462–482; it reads IASGIVVGVLLHAGAHLTCDF. The Cytoplasmic segment spans residues 483–516; the sequence is PRLIAADEDTYEPMEKYFGDQPTSYWWFVKGVEG. A helical transmembrane segment spans residues 517-537; that stretch reads WTGIVMVVLMAIAFTLATPWF. The Extracellular segment spans residues 538 to 559; it reads RRNKLNLPNFLKKLTGFNAFWY. A helical transmembrane segment spans residues 560 to 580; it reads THHLFIIVYALLIVHGIKLYL. The Cytoplasmic segment spans residues 581 to 588; that stretch reads TKIWYQKT. A helical transmembrane segment spans residues 589–606; the sequence is TWMYLAVPILLYASERLL. Residues 607 to 734 lie on the Extracellular side of the membrane; the sequence is RAFRSSIKPV…PYGAPAQDYK (128 aa). The region spanning 611 to 732 is the FAD-binding FR-type domain; it reads SSIKPVKMIK…DGPYGAPAQD (122 aa). Residues 735–755 traverse the membrane as a helical segment; sequence KYDVVLLVGLGIGATPMISIL. Topologically, residues 756-921 are cytoplasmic; sequence KDIINNMKGP…TKFDFHKENF (166 aa).

Belongs to the RBOH (TC 5.B.1.3) family. Monomer and homodimer. Interacts with BIK1 and FLS2. Interacts with PBL13. Binds to SIK1 upon flagellin perception and becomes activated by phosphorylation. Phosphorylated at Ser-39, Ser-343 and Ser-347 by BIK1 upon flagellin (flg22) treatment. Activated by phosphorylation at Ser-347 mediated by SIK1 and at Ser-8, Ser-9 and Ser-339 upon flagellin (e.g. flg22) perception. More abundant in roots than in leaves, stems or inflorescences. Expressed in mesophyll and guard cells.

It localises to the membrane. Inhibited by diphenylene iodinium (DPI). In terms of biological role, calcium-dependent NADPH oxidase that generates superoxide. Involved in the generation of reactive oxygen species (ROS) during incompatible interactions with pathogens, in response to pathogen-associated molecular pattern (PAMP)-triggered immunity (PTI) signaling and in UV-B and abscisic acid ROS-dependent signaling and via SIK1 mediated activation by phosphorylation. Might be required for ROS signal amplification during light stress. The protein is Respiratory burst oxidase homolog protein D of Arabidopsis thaliana (Mouse-ear cress).